Here is a 248-residue protein sequence, read N- to C-terminus: Triosephosphate isomerase (248 aa).

Substrate contacts are provided by Asn10 and Lys12. The active-site Electrophile is His95. The active-site Proton acceptor is the Glu165.

It belongs to the triosephosphate isomerase family. Homodimer.

It catalyses the reaction D-glyceraldehyde 3-phosphate = dihydroxyacetone phosphate. It functions in the pathway carbohydrate biosynthesis; gluconeogenesis. The protein operates within carbohydrate degradation; glycolysis; D-glyceraldehyde 3-phosphate from glycerone phosphate: step 1/1. The sequence is that of Triosephosphate isomerase (TPI1) from Kluyveromyces marxianus (Yeast).